The chain runs to 223 residues: MOB-like protein phocein (223 aa).

The disordered stretch occupies residues 1 to 23 (MTAATENRTVRRNGPGTKRADWN). Zn(2+) is bound by residues C92, C97, H169, and H174.

The protein belongs to the MOB1/phocein family.

The protein resides in the cytoplasm. Its subcellular location is the perinuclear region. The protein localises to the membrane. It is found in the golgi apparatus. It localises to the golgi stack membrane. Its function is as follows. May play a role in membrane trafficking, specifically in membrane budding reactions. This is MOB-like protein phocein from Caenorhabditis elegans.